The sequence spans 431 residues: Enolase (431 aa).

A (2R)-2-phosphoglycerate-binding site is contributed by Gln-162. Glu-204 serves as the catalytic Proton donor. Mg(2+)-binding residues include Asp-241, Glu-284, and Asp-311. The (2R)-2-phosphoglycerate site is built by Lys-336, Arg-365, Ser-366, and Lys-387. Catalysis depends on Lys-336, which acts as the Proton acceptor.

This sequence belongs to the enolase family. Requires Mg(2+) as cofactor.

The protein resides in the cytoplasm. It is found in the secreted. It localises to the cell surface. It catalyses the reaction (2R)-2-phosphoglycerate = phosphoenolpyruvate + H2O. Its pathway is carbohydrate degradation; glycolysis; pyruvate from D-glyceraldehyde 3-phosphate: step 4/5. Catalyzes the reversible conversion of 2-phosphoglycerate (2-PG) into phosphoenolpyruvate (PEP). It is essential for the degradation of carbohydrates via glycolysis. This Sorangium cellulosum (strain So ce56) (Polyangium cellulosum (strain So ce56)) protein is Enolase.